Consider the following 85-residue polypeptide: ATP synthase subunit c (85 aa).

2 helical membrane passes run 10-30 (IAVALLIGLGALGTAIGFGLL) and 53-73 (FIVAGLLDAVTMIGVGIALFF).

Belongs to the ATPase C chain family. In terms of assembly, F-type ATPases have 2 components, F(1) - the catalytic core - and F(0) - the membrane proton channel. F(1) has five subunits: alpha(3), beta(3), gamma(1), delta(1), epsilon(1). F(0) has three main subunits: a(1), b(2) and c(10-14). The alpha and beta chains form an alternating ring which encloses part of the gamma chain. F(1) is attached to F(0) by a central stalk formed by the gamma and epsilon chains, while a peripheral stalk is formed by the delta and b chains.

The protein localises to the cell inner membrane. Its function is as follows. F(1)F(0) ATP synthase produces ATP from ADP in the presence of a proton or sodium gradient. F-type ATPases consist of two structural domains, F(1) containing the extramembraneous catalytic core and F(0) containing the membrane proton channel, linked together by a central stalk and a peripheral stalk. During catalysis, ATP synthesis in the catalytic domain of F(1) is coupled via a rotary mechanism of the central stalk subunits to proton translocation. In terms of biological role, key component of the F(0) channel; it plays a direct role in translocation across the membrane. A homomeric c-ring of between 10-14 subunits forms the central stalk rotor element with the F(1) delta and epsilon subunits. This is ATP synthase subunit c from Pseudomonas syringae pv. syringae (strain B728a).